We begin with the raw amino-acid sequence, 364 residues long: MGLCFQLNLASLSLILFSSFPGLLAQSQQHFLGQNNTSLLSGGRCNLARGKWVYDSSYPLYSAFSCPFIDSEFNCQKAGRPDTNYQHFRWQPFSCPLPRFDGANFMRRMRGKKIMMVGDSLSLNMFESLACLLHASLPNAKYSLRRSQPLTSLTFQDYGVTINLYRTQFLVDVVQEKAGRVLVLDSIKQADAWLGMDVLIFNSWHWWTHTSGLQPWDYMREGNQLYKDMNRLVAYYKGLNTWARWINNNIVPSRTQVFFQGVSPVHYDGREWNEPLKSCNGQTQPFMGQRYPGGLPLGWVVVNKVLSRIRKPVHLLDLTTLSEYRKDAHPSLYNGISKDLDCSHWCLPGLPDTWNLLLYSSLTS.

Residues 9-25 form a helical; Signal-anchor for type II membrane protein membrane-spanning segment; sequence LASLSLILFSSFPGLLA. The GDS motif signature appears at 118 to 120; sequence GDS. The DCXHWCLPGXXDXWN motif motif lies at 341–355; sequence DCSHWCLPGLPDTWN.

Belongs to the PC-esterase family. TBL subfamily.

The protein localises to the membrane. Functionally, may act as a bridging protein that binds pectin and other cell wall polysaccharides. Probably involved in maintaining esterification of pectins. May be involved in the specific O-acetylation of cell wall polymers. This is Protein trichome birefringence-like 40 (TBL40) from Arabidopsis thaliana (Mouse-ear cress).